The sequence spans 338 residues: Structural protein VP9 (338 aa).

The protein resides in the virion. Functionally, plays an important role in virus transmission by the insect vector. May participate in the virus stability by binding clamp proteins and surrounding the pentameric turrets present in the virion. The protein is Structural protein VP9 of Rice ragged stunt virus (isolate Thailand) (RRSV).